A 215-amino-acid chain; its full sequence is Octanoyltransferase (215 aa).

One can recognise a BPL/LPL catalytic domain in the interval 31–206 (PDSQDEIWLV…QLVKHLDYAE (176 aa)). Substrate-binding positions include 70-77 (RGGQVTYH), 137-139 (SLG), and 150-152 (GLA). The active-site Acyl-thioester intermediate is cysteine 168.

It belongs to the LipB family.

The protein localises to the cytoplasm. It catalyses the reaction octanoyl-[ACP] + L-lysyl-[protein] = N(6)-octanoyl-L-lysyl-[protein] + holo-[ACP] + H(+). It functions in the pathway protein modification; protein lipoylation via endogenous pathway; protein N(6)-(lipoyl)lysine from octanoyl-[acyl-carrier-protein]: step 1/2. Its function is as follows. Catalyzes the transfer of endogenously produced octanoic acid from octanoyl-acyl-carrier-protein onto the lipoyl domains of lipoate-dependent enzymes. Lipoyl-ACP can also act as a substrate although octanoyl-ACP is likely to be the physiological substrate. The polypeptide is Octanoyltransferase (Pseudomonas putida (strain ATCC 700007 / DSM 6899 / JCM 31910 / BCRC 17059 / LMG 24140 / F1)).